The primary structure comprises 206 residues: D-ribitol-5-phosphate phosphatase (206 aa).

The Nucleophile role is filled by Asp-8. Residues Asp-8 and Asp-172 each contribute to the Mg(2+) site.

This sequence belongs to the HAD-like hydrolase superfamily. Requires Mg(2+) as cofactor.

The catalysed reaction is D-ribitol 1-phosphate + H2O = ribitol + phosphate. The enzyme catalyses D-ribitol 5-phosphate + H2O = ribitol + phosphate. It catalyses the reaction 5-amino-6-(5-phospho-D-ribitylamino)uracil + H2O = 5-amino-6-(D-ribitylamino)uracil + phosphate. Its pathway is cofactor biosynthesis; riboflavin biosynthesis; 5-amino-6-(D-ribitylamino)uracil from GTP: step 4/4. Its function is as follows. Catalyzes the dephosphorylation of D-ribitol-5-phosphate and D-ribitol-1-phosphate. Is also able to dephosphorylate 5-amino-6-(5-phospho-D-ribitylamino)uracil, and thus could be involved in the riboflavin biosynthesis pathway. The protein is D-ribitol-5-phosphate phosphatase of Bacteroides thetaiotaomicron (strain ATCC 29148 / DSM 2079 / JCM 5827 / CCUG 10774 / NCTC 10582 / VPI-5482 / E50).